The sequence spans 1368 residues: MAVAEAKPQYSHAEKKRFRKSFGKQTDIMPIPNLLEIQLKSYRDFLQTDTKLSEQLNTGLHAAFSSVFPIESFSGNARLEYVGYKLGEPAFDVRECKLRGLTYSAPLRVKIRLVVLDKDASDDPKPIKDIREQDVFMGEIPLMTDVGTFVVNGTERVVVSQLHRSPGVIFEHDKGKTHSSGKLLYSARIIPYRGSWLDFEFDPKDCVYVRIDRRRKLPVTILLRALGYEAEDILSEFFETTRCHLKNGEYHIDLIPQRLRGEIASFDIHVPETGELIVEQGRRITARHIKQMEKSQMQDLVVPRDYLIGKTLAKNIIDTSTGEFLAQANDEITEELLDAMANHGILQIDMIYTNDLDHGSYISDTLKIDPTGSQLEALVEIYRMMRPGEPPTKEAAEALFKNLFFVEERYDLSAVGRMKFNRRVGIKSDEGPGTLTKEDILSVIKTLIDIRNGIGMVDDIDHLGNRRVRSVGEMTENQFRVGLVRVERAVKERLSLVESENLMPQDLINAKPVSAAIKEFFGSSQLSQFMDQVNPLSGVTHKRRVSALGPGGLTRERAGFEVRDVHTTHYGRVCPIETPEGPNIGLINSLSVYARTNEYGFIETPCRKVVNGRVTDEVEYLSAIEEVDQYIAQSNVELDAQGNILADLVPCRHQNEFSLTTPDKINYMDVSPKQIVSVAASLIPFLEHDDANRALMGSNMQRQAVPTLRSEKPLVGTGMERIVASDSGVSVVAKRGGVIDLVDASRIVVRVNDDETTAGETGVDIYNLTKYFRSNQDTCINQRPIVSTGDRIQRGDVLADGPCTDMGELALGQNLLVAFMPWNGYNFEDSILISERIVHDDRFTTIHIEELTCIARDTKLGTEEITADIPNVGESALSNLDESGVVYIGAEVKAGDILVGKVTPKGETQLTPEEKLLRAIFGEKASDVKDSSLRVPSGMNGTVIDVQVFTRDGLEKDARAKSIEEEHLARVRKDLIDERRIREEDIYHRVSHLLLDKVATGGPGSLKPGSKITQDYLDKVEREKWFDIRIEDDAVSQQLEQLSKQLELLTKEMEKRFNDSRKKIIQGDDLAPGVLKIVKVYLAVKRRIQPGDKMAGRHGNKGVISIVVPVEDMPHMEDGTAVDIVLNPLGVPSRMNIGQVLETHLGLAAKGLGRKIAQMLDERQTPEAIKAYLEKIYNHDGVQRVNLKCLNDDELMTLADNLRAGVPMATPVFDGATEQEIKSMLQLADLPADGKTVLIDGRTGNKFDNPVTVGYMYMLKLNHLVDDKMHARSTGSYSLVTQQPLGGKAQFGGQRFGEMEVWALEAYGAAYTLQEMLTVKSDDVGGRTKIYKNIVDGDHRMDPGMPESFNVLLKEIRALGIDIELEHD.

The protein belongs to the RNA polymerase beta chain family. In terms of assembly, the RNAP catalytic core consists of 2 alpha, 1 beta, 1 beta' and 1 omega subunit. When a sigma factor is associated with the core the holoenzyme is formed, which can initiate transcription.

It carries out the reaction RNA(n) + a ribonucleoside 5'-triphosphate = RNA(n+1) + diphosphate. Its function is as follows. DNA-dependent RNA polymerase catalyzes the transcription of DNA into RNA using the four ribonucleoside triphosphates as substrates. The chain is DNA-directed RNA polymerase subunit beta from Legionella pneumophila (strain Corby).